A 380-amino-acid polypeptide reads, in one-letter code: MAKRDYYEVLGVERGSSEADLKKAYRRLAMKHHPDRNPDDKASEELFKEANEAYEVLSDASKRAAYDQYGHAGVDPSMGGGGGFGGGAGGANFSDIFGDVFSDFFGGGRAGGGGGRGGAQRGSDLRYTLELNLEEAVRGTNVNIRVPTLVNCKPCDGSGAKKGSSPVTCPTCGGIGQVRMQQGFFSVQQTCPRCHGHGKIISDPCDSCHGEGRVEESKTLSVKVPPGVDTGDRIRLSGEGEAGTQGGPTGDLYVVINVREHAIFQRDGKHLFCEVPISFTDAALGGELEVPTLDGRVKLKIPEGTQTGKQFRLRGKGVAPVRGGGAGDLMCRVAVETPVNLSKRQRELLEEFRTSLENDESHSPKASGWFEGVKRFFGDL.

The 66-residue stretch at 5–70 folds into the J domain; the sequence is DYYEVLGVER…SKRAAYDQYG (66 aa). A CR-type zinc finger spans residues 139–217; the sequence is GTNVNIRVPT…CHGEGRVEES (79 aa). Zn(2+)-binding residues include C152, C155, C169, C172, C191, C194, C205, and C208. CXXCXGXG motif repeat units lie at residues 152–159, 169–176, 191–198, and 205–212; these read CKPCDGSG, CPTCGGIG, CPRCHGHG, and CDSCHGEG. The tract at residues 224–245 is disordered; the sequence is VPPGVDTGDRIRLSGEGEAGTQ.

Belongs to the DnaJ family. Homodimer. Zn(2+) is required as a cofactor.

It is found in the cytoplasm. Its function is as follows. Participates actively in the response to hyperosmotic and heat shock by preventing the aggregation of stress-denatured proteins and by disaggregating proteins, also in an autonomous, DnaK-independent fashion. Unfolded proteins bind initially to DnaJ; upon interaction with the DnaJ-bound protein, DnaK hydrolyzes its bound ATP, resulting in the formation of a stable complex. GrpE releases ADP from DnaK; ATP binding to DnaK triggers the release of the substrate protein, thus completing the reaction cycle. Several rounds of ATP-dependent interactions between DnaJ, DnaK and GrpE are required for fully efficient folding. Also involved, together with DnaK and GrpE, in the DNA replication of plasmids through activation of initiation proteins. This Pseudomonas syringae pv. syringae (strain B728a) protein is Chaperone protein DnaJ.